Consider the following 472-residue polypeptide: MAQANFGVVGMAVMGKNLALNVESRGYTVAIYNRTTSKTEEVYKEHQDKNLVLTKTLEEFVGSLEKPRRIMLMVQAGAATDATIKSLLPLLDKGDILIDGGNTHFPDTMRRNAELADSGINFIGTGVSGGEKGALLGPSMMPGGQKEAYDLVAPIFEQIAAKAPQDGKPCVAYMGANGAGHYVKMVHNGIEYGDMQLIAESYDLLKRVLGLSNAEIQAIFEEWNEGELDSYLIEITKEVLKRKDDEGEGYIVDKILDKAGNKGTGKWTSESALDLGVPLPLITESVFARYISTYKDERVKASKVLSGPAVNFSGDKKEVIEKIRKALYFSKIMSYAQGFAQLRKASEEFDWDLPYGTIAQIWRAGCIIRAEFLQNITDAFDKDSELENLLLDDYFVDITKRYQEAVRDVVSLAVQAGIPIPTFTSAISYYDSYRSENLPANLIQAQRDYFGAHTYERTDKAGIFHYDWYTED.

Residues 10 to 15, 33 to 35, 74 to 76, and Asn102 contribute to the NADP(+) site; these read GMAVMG, NRT, and VQA. Residues Asn102 and 128–130 each bind substrate; that span reads SGG. Lys184 functions as the Proton acceptor in the catalytic mechanism. Position 187–188 (187–188) interacts with substrate; sequence HN. Glu191 (proton donor) is an active-site residue. Substrate is bound by residues Tyr192, Lys262, Arg289, Arg447, and His453.

It belongs to the 6-phosphogluconate dehydrogenase family. Homodimer.

The catalysed reaction is 6-phospho-D-gluconate + NADP(+) = D-ribulose 5-phosphate + CO2 + NADPH. It participates in carbohydrate degradation; pentose phosphate pathway; D-ribulose 5-phosphate from D-glucose 6-phosphate (oxidative stage): step 3/3. Its function is as follows. Catalyzes the oxidative decarboxylation of 6-phosphogluconate to ribulose 5-phosphate and CO(2), with concomitant reduction of NADP to NADPH. In Lactococcus lactis subsp. lactis (strain IL1403) (Streptococcus lactis), this protein is 6-phosphogluconate dehydrogenase, decarboxylating (gnd).